We begin with the raw amino-acid sequence, 96 residues long: MANFSLKAVKREDLGSGASRRLRRAGKIPAVIYGGDKEAVSIVLDHDKVLHSTEDKAFFSSEITLEIDGQEERVIIKALQRHPYKVKLVHADFMRV.

This sequence belongs to the bacterial ribosomal protein bL25 family. In terms of assembly, part of the 50S ribosomal subunit; part of the 5S rRNA/L5/L18/L25 subcomplex. Contacts the 5S rRNA. Binds to the 5S rRNA independently of L5 and L18.

Its function is as follows. This is one of the proteins that binds to the 5S RNA in the ribosome where it forms part of the central protuberance. The polypeptide is Large ribosomal subunit protein bL25 (Francisella philomiragia subsp. philomiragia (strain ATCC 25017 / CCUG 19701 / FSC 153 / O#319-036)).